The primary structure comprises 91 residues: Auxin-responsive protein SAUR20 (91 aa).

It belongs to the ARG7 family.

The protein resides in the cell membrane. Its function is as follows. Functions as a positive effector of cell expansion through modulation of auxin transport. The chain is Auxin-responsive protein SAUR20 from Arabidopsis thaliana (Mouse-ear cress).